A 192-amino-acid polypeptide reads, in one-letter code: E3 ubiquitin-protein ligase RNF185 (192 aa).

Over residues 1–13 (MASKGPSASASTE) the composition is skewed to polar residues. The tract at residues 1-30 (MASKGPSASASTENSNAGGPSGSSNGTGES) is disordered. Over 1-130 (MASKGPSASA…GGFQGFGFGD (130 aa)) the chain is Cytoplasmic. The segment covering 14–27 (NSNAGGPSGSSNGT) has biased composition (low complexity). Positions 29–80 (ESGGQDSTFECNICLDTAKDAVISLCGHLFCWPCLHQWLETRPNRQVCPVCK) are required for ubiquitin ligase activity and protection against ER stress-induced cell death. The RING-type zinc finger occupies 39–80 (CNICLDTAKDAVISLCGHLFCWPCLHQWLETRPNRQVCPVCK). The segment at 90–123 (PLYGRGSTGQQDPREKTPPRPQGQRPEPENRGGF) is disordered. A helical transmembrane segment spans residues 131 to 151 (GGFQMSFGIGAFPFGIFATAF). The Mitochondrial intermembrane segment spans residues 152-171 (NINDGRPPPAVPGTPQYVDE). The helical transmembrane segment at 172–192 (QFLSRLFLFVALVIMFWLLIA) threads the bilayer.

Interacts with ATG5 and BNIP1. In terms of tissue distribution, ubiquitously expressed with high expression in testis.

The protein resides in the mitochondrion outer membrane. The protein localises to the endoplasmic reticulum membrane. The enzyme catalyses S-ubiquitinyl-[E2 ubiquitin-conjugating enzyme]-L-cysteine + [acceptor protein]-L-lysine = [E2 ubiquitin-conjugating enzyme]-L-cysteine + N(6)-ubiquitinyl-[acceptor protein]-L-lysine.. It participates in protein modification; protein ubiquitination. E3 ubiquitin-protein ligase that regulates selective mitochondrial autophagy by mediating 'Lys-63'-linked polyubiquitination of BNIP1. Acts in the endoplasmic reticulum (ER)-associated degradation (ERAD) pathway, which targets misfolded proteins that accumulate in the endoplasmic reticulum (ER) for ubiquitination and subsequent proteasome-mediated degradation. Protects cells from ER stress-induced apoptosis. Responsible for the cotranslational ubiquitination and degradation of CFTR in the ERAD pathway. Also acts as a regulator of the innate antiviral response by catalyzing 'Lys-27'-linked polyubiquitination of CGAS, thereby promoting CGAS cyclic GMP-AMP synthase activity. Preferentially associates with the E2 enzymes UBE2J1 and UBE2J2. In Mus musculus (Mouse), this protein is E3 ubiquitin-protein ligase RNF185 (Rnf185).